Here is a 567-residue protein sequence, read N- to C-terminus: Wee1-like protein kinase 2 (567 aa).

Basic and acidic residues-rich tracts occupy residues 1-12, 25-35, 42-51, and 64-77; these read MDDKDIDKELRQ, EGQKKVEESRE, EKGEVQDSEA, and HELDTSSEKDKESP. Residues 1–117 form a disordered region; that stretch reads MDDKDIDKEL…DSPSTPKTML (117 aa). S76 bears the Phosphoserine mark. The short motif at 173-175 is the Nuclear localization signal element; the sequence is KRK. The region spanning 212–486 is the Protein kinase domain; the sequence is FLEVEKIGVG…AAALARNTVL (275 aa). Residues 218–226 and K241 contribute to the ATP site; that span reads IGVGEFGTV. The Nuclear export signal signature appears at 315–329; it reads KLKDILLQISLGLNY. The active-site Proton acceptor is D339. Mg(2+)-binding residues include N344 and D380. Residues 494 to 519 adopt a coiled-coil conformation; sequence EELQQQLNLEKFKTATLERELREAQQ. The disordered stretch occupies residues 514 to 567; that stretch reads LREAQQAQSPQGYTHHGDTGVSGTHTGSRSTKRLVGGKSARSSSFTSGEREPLH.

The protein belongs to the protein kinase superfamily. Ser/Thr protein kinase family. WEE1 subfamily. Post-translationally, phosphorylated on serine residues. Phosphorylation leads to increase its activity. Expressed in oocytes (at protein level). May also be expressed in testis.

The protein localises to the nucleus. It catalyses the reaction L-tyrosyl-[protein] + ATP = O-phospho-L-tyrosyl-[protein] + ADP + H(+). Its function is as follows. Oocyte-specific protein tyrosine kinase that phosphorylates and inhibits CDK1/CDC2 and acts as a key regulator of meiosis during both prophase I and metaphase II. Required to maintain meiotic arrest in oocytes during the germinal vesicle (GV) stage, a long period of quiescence at dictyate prophase I, by phosphorylating CDK1 at 'Tyr-15', leading to inhibit CDK1 activity and prevent meiotic reentry. Also required for metaphase II exit during egg activation by phosphorylating CDK1 at 'Tyr-15', to ensure exit from meiosis in oocytes and promote pronuclear formation. The sequence is that of Wee1-like protein kinase 2 (WEE2) from Homo sapiens (Human).